Here is a 215-residue protein sequence, read N- to C-terminus: LysM and putative peptidoglycan-binding domain-containing protein 2 (215 aa).

The interval 1–40 is disordered; the sequence is MADLSPAPALREGGPRAHRPSAPSPPPRSRSTSEPEEAEL. A2 carries the post-translational modification N-acetylalanine. 4 positions are modified to phosphoserine: S5, S24, S33, and S57. Residues 71–115 form the LysM domain; that stretch reads VEHRVRAGDTLQGIALKYGVTMEQIKRANKLFTNDCIFLKKTLSI. 2 disordered regions span residues 135 to 176 and 195 to 215; these read ESET…EVSA and RKLK…LYHS. Positions 145–156 are enriched in acidic residues; sequence QEEEPVVSEEEL. Pro residues predominate over residues 157-169; the sequence is PPPSPQDPDPKPA. Residues 196-205 show a composition bias toward basic and acidic residues; the sequence is KLKEESRDEE.

The sequence is that of LysM and putative peptidoglycan-binding domain-containing protein 2 (Lysmd2) from Mus musculus (Mouse).